The chain runs to 235 residues: Phosphoribosylaminoimidazole-succinocarboxamide synthase (235 aa).

Belongs to the SAICAR synthetase family.

The enzyme catalyses 5-amino-1-(5-phospho-D-ribosyl)imidazole-4-carboxylate + L-aspartate + ATP = (2S)-2-[5-amino-1-(5-phospho-beta-D-ribosyl)imidazole-4-carboxamido]succinate + ADP + phosphate + 2 H(+). It participates in purine metabolism; IMP biosynthesis via de novo pathway; 5-amino-1-(5-phospho-D-ribosyl)imidazole-4-carboxamide from 5-amino-1-(5-phospho-D-ribosyl)imidazole-4-carboxylate: step 1/2. The sequence is that of Phosphoribosylaminoimidazole-succinocarboxamide synthase from Streptococcus mutans serotype c (strain ATCC 700610 / UA159).